The following is a 74-amino-acid chain: Cytochrome c oxidase subunit 2 (74 aa).

Topologically, residues 1 to 14 (MAHPSQLGLQDAAS) are mitochondrial intermembrane. A helical membrane pass occupies residues 15–45 (PVMEELLHFHDHALMIVFLISTLVLYIIVAM). Topologically, residues 46–74 (VSTKLTDKYTIDSQEIEIVWTVLPAVILI) are mitochondrial matrix.

Belongs to the cytochrome c oxidase subunit 2 family. Component of the cytochrome c oxidase (complex IV, CIV), a multisubunit enzyme composed of 14 subunits. The complex is composed of a catalytic core of 3 subunits MT-CO1, MT-CO2 and MT-CO3, encoded in the mitochondrial DNA, and 11 supernumerary subunits COX4I, COX5A, COX5B, COX6A, COX6B, COX6C, COX7A, COX7B, COX7C, COX8 and NDUFA4, which are encoded in the nuclear genome. The complex exists as a monomer or a dimer and forms supercomplexes (SCs) in the inner mitochondrial membrane with NADH-ubiquinone oxidoreductase (complex I, CI) and ubiquinol-cytochrome c oxidoreductase (cytochrome b-c1 complex, complex III, CIII), resulting in different assemblies (supercomplex SCI(1)III(2)IV(1) and megacomplex MCI(2)III(2)IV(2)). Found in a complex with TMEM177, COA6, COX18, COX20, SCO1 and SCO2. Interacts with TMEM177 in a COX20-dependent manner. Interacts with COX20. Interacts with COX16. Requires Cu cation as cofactor.

The protein localises to the mitochondrion inner membrane. It catalyses the reaction 4 Fe(II)-[cytochrome c] + O2 + 8 H(+)(in) = 4 Fe(III)-[cytochrome c] + 2 H2O + 4 H(+)(out). Functionally, component of the cytochrome c oxidase, the last enzyme in the mitochondrial electron transport chain which drives oxidative phosphorylation. The respiratory chain contains 3 multisubunit complexes succinate dehydrogenase (complex II, CII), ubiquinol-cytochrome c oxidoreductase (cytochrome b-c1 complex, complex III, CIII) and cytochrome c oxidase (complex IV, CIV), that cooperate to transfer electrons derived from NADH and succinate to molecular oxygen, creating an electrochemical gradient over the inner membrane that drives transmembrane transport and the ATP synthase. Cytochrome c oxidase is the component of the respiratory chain that catalyzes the reduction of oxygen to water. Electrons originating from reduced cytochrome c in the intermembrane space (IMS) are transferred via the dinuclear copper A center (CU(A)) of subunit 2 and heme A of subunit 1 to the active site in subunit 1, a binuclear center (BNC) formed by heme A3 and copper B (CU(B)). The BNC reduces molecular oxygen to 2 water molecules using 4 electrons from cytochrome c in the IMS and 4 protons from the mitochondrial matrix. In Megalops atlanticus (Tarpon), this protein is Cytochrome c oxidase subunit 2 (mt-co2).